A 290-amino-acid chain; its full sequence is Cilia- and flagella-associated protein 298-A (290 aa).

Belongs to the CFAP298 family.

The protein resides in the cytoplasm. The protein localises to the cytoskeleton. It is found in the cilium basal body. In terms of biological role, plays a role in motile cilium function, possibly by acting on outer dynein arm assembly. Seems to be important for initiation rather than maintenance of cilium motility. Required for correct positioning of the cilium at the apical cell surface, suggesting an additional role in the planar cell polarity (PCP) pathway. May suppress canonical Wnt signaling activity. This Xenopus laevis (African clawed frog) protein is Cilia- and flagella-associated protein 298-A (cfap298-a).